Here is a 981-residue protein sequence, read N- to C-terminus: Lateral signaling target protein 2 homolog (981 aa).

The disordered stretch occupies residues 308–462; sequence PLGSSSIEAP…LESSDDDTDE (155 aa). Composition is skewed to low complexity over residues 326 to 356, 369 to 380, 390 to 404, and 412 to 433; these read TTSS…TTNT, NNHNSNSNSSTN, SPSM…TPTA, and PSHS…PADW. Over residues 434 to 462 the composition is skewed to acidic residues; the sequence is SDGDDEDEDDDDIEVDEEDLESSDDDTDE. A phosphoserine mark is found at Ser544 and Ser545. 2 disordered regions span residues 561 to 642 and 749 to 897; these read EQMQ…SSLS and DNVF…SPPA. Basic residues predominate over residues 576–611; that stretch reads HSHRHHQRHHHHHHHRHSHQHRQPHPHRTTRSGRKR. The segment covering 630–642 has biased composition (low complexity); sequence LASGDTSAASSLS. Residues 760 to 791 show a composition bias toward polar residues; sequence ATGQRHSAGASMQRNNTIDLASQSGEGSPSGA. Ser805 carries the post-translational modification Phosphoserine. Low complexity-rich tracts occupy residues 811–866 and 883–896; these read AASS…PVSA and PSSA…LSPP. Residues 901 to 961 form an FYVE-type zinc finger; it reads DGKAPRCMAC…VCRDCYVREV (61 aa). Cys907, Cys910, Cys923, Cys926, Cys931, Cys934, Cys953, and Cys956 together coordinate Zn(2+).

It belongs to the lst-2 family.

Its function is as follows. Negative regulator of epidermal growth factor receptor (EGFR) signaling. The sequence is that of Lateral signaling target protein 2 homolog from Drosophila erecta (Fruit fly).